Consider the following 130-residue polypeptide: Small ribosomal subunit protein uS9 (130 aa).

Residues 109–130 form a disordered region; that stretch reads RKKERKKYGQRAARARYQYSKR.

Belongs to the universal ribosomal protein uS9 family.

In Nitratidesulfovibrio vulgaris (strain DSM 19637 / Miyazaki F) (Desulfovibrio vulgaris), this protein is Small ribosomal subunit protein uS9.